Consider the following 368-residue polypeptide: Peptide chain release factor 2 (368 aa).

Gln248 is subject to N5-methylglutamine.

The protein belongs to the prokaryotic/mitochondrial release factor family. Post-translationally, methylated by PrmC. Methylation increases the termination efficiency of RF2.

It localises to the cytoplasm. Its function is as follows. Peptide chain release factor 2 directs the termination of translation in response to the peptide chain termination codons UGA and UAA. This Corynebacterium glutamicum (strain R) protein is Peptide chain release factor 2.